Reading from the N-terminus, the 757-residue chain is MGQKRQRDQKGPGSFAKKRKKSAKPSDATAEDSDWDGIVGMNELNWKEVALPDRLEDAGGFFGLEEIEGVDIIRSEGNGEIKFKKKEPEETNTQSDDEWEGFGDDDQAVSQEESKETQDEPNESDKKAKVKESKNAKKEKKKNAKDARKEQKEKAVESKEDKGIKSGLSFAALQEEEDDGADVSAWESLGLSPEILAGISKMKFTTPTSVQKACIPPILDGRDVIGKASTGSGKTLAFGIPILEYYLEKLRSKTQKDSEKTETTPIALVLSPTRELAHQLAKHIGEVVSHAPGVNARIALLTGGLSLQKQQRVLTNADIVIGTPGRVWEVLSSGHGLIRKMQAIKFLVIDEADRLLSEGHFKEAHEILAALDRVVDGEFPDESSDESDDELDPKSGRQTLVFSATFHRDLQQKLAGKGKWTGGDIMSQKESMEYLLQKLNFREEKPRFIDVNPVSQMAENLKEGIVECAAMEKDLFLYTLLLYHPKHRTLVFTNSISAVRRLTQLLQTLQLPALALHSSMAQKARLRSVERFSSPSSDPSSILVATDVAARGLDIKGIDFVVHYHAPRTADAYVHRSGRTARAGASGKSVIICSPDEMVGVVRLAAKVHANMANRKKVPLESLELDRRVVSRVKQRVTLAARIVDSNIAKEKVSSEDNWLRTAAEDLGVDYDSEEFDNAAARGRGRGRGRQERERKAGSTSKGELAGMRAELKQLLSQRVNVGVSERYLTSGRVDIEALLRGEGNNSFLGQVDPLDF.

2 stretches are compositionally biased toward basic and acidic residues: residues M1 to K10 and D71 to E89. Disordered regions lie at residues M1–I38 and E66–D161. Residues S95 to Q107 show a composition bias toward acidic residues. 2 stretches are compositionally biased toward basic and acidic residues: residues E112 to A136 and A144 to D161. The short motif at S184–K212 is the Q motif element. The Helicase ATP-binding domain occupies I215–D424. A228 to T235 serves as a coordination point for ATP. Residues D350–D353 carry the DEAD box motif. The Helicase C-terminal domain maps to N460–D626. Residues N678 to E704 are disordered.

This sequence belongs to the DEAD box helicase family. DDX24/MAK5 subfamily.

The protein resides in the nucleus. The protein localises to the nucleolus. The enzyme catalyses ATP + H2O = ADP + phosphate + H(+). ATP-binding RNA helicase involved in the biogenesis of 60S ribosomal subunits and is required for the normal formation of 25S and 5.8S rRNAs. The protein is ATP-dependent RNA helicase mak5 (mak5) of Aspergillus oryzae (strain ATCC 42149 / RIB 40) (Yellow koji mold).